The primary structure comprises 309 residues: Olfactory receptor 1A2 (309 aa).

The Extracellular portion of the chain corresponds to 1 to 25 (MKKENQSFNLDFILLGVTSQQEQNN). Asn-5 carries an N-linked (GlcNAc...) asparagine glycan. The chain crosses the membrane as a helical span at residues 26–49 (VFFVIFLCIYPITLTGNLLIILAI). At 50–57 (CADIRLHN) the chain is on the cytoplasmic side. Residues 58-79 (PMYFLLANLSLVDIIFSSVTIP) traverse the membrane as a helical segment. The Extracellular portion of the chain corresponds to 80 to 100 (KVLANHLLGSKFISFGGCLMQ). Residues Cys-97 and Cys-189 are joined by a disulfide bond. A helical transmembrane segment spans residues 101 to 120 (MYFMIALAKADSYTLAAMAY). Over 121 to 139 (DRAVAISCPLHYTTIMSPR) the chain is Cytoplasmic. Residues 140–158 (SCILLIAGSWVIGNTSALP) traverse the membrane as a helical segment. Residues 159–195 (HTLLTASLSFCGNQEVANFYCDIMPLLKLSCSDVHFN) are Extracellular-facing. Residues 196-218 (VKMMYLGVGVFSLPLLCIIVSYV) traverse the membrane as a helical segment. Residues 219-235 (QVFSTVFQVPSTKSLFK) are Cytoplasmic-facing. The helical transmembrane segment at 236-258 (AFCTCGSHLTVVFLYYGTTMGMY) threads the bilayer. Residues 259 to 270 (FRPLTSYSPKDA) lie on the Extracellular side of the membrane. The helical transmembrane segment at 271-290 (VITVMYVAVTPALNPFIYSL) threads the bilayer. At 291 to 309 (RNWDMKAALQKLFSKRISS) the chain is on the cytoplasmic side.

It belongs to the G-protein coupled receptor 1 family.

The protein localises to the cell membrane. Its function is as follows. Odorant receptor. This chain is Olfactory receptor 1A2 (OR1A2), found in Homo sapiens (Human).